The sequence spans 892 residues: Alanine--tRNA ligase (892 aa).

Residues histidine 565, histidine 569, cysteine 675, and histidine 679 each contribute to the Zn(2+) site. Residues 852 to 871 form a disordered region; the sequence is MGGKGGGGRPDMAQAGGPEA.

The protein belongs to the class-II aminoacyl-tRNA synthetase family. The cofactor is Zn(2+).

It is found in the cytoplasm. The enzyme catalyses tRNA(Ala) + L-alanine + ATP = L-alanyl-tRNA(Ala) + AMP + diphosphate. In terms of biological role, catalyzes the attachment of alanine to tRNA(Ala) in a two-step reaction: alanine is first activated by ATP to form Ala-AMP and then transferred to the acceptor end of tRNA(Ala). Also edits incorrectly charged Ser-tRNA(Ala) and Gly-tRNA(Ala) via its editing domain. The chain is Alanine--tRNA ligase from Parvibaculum lavamentivorans (strain DS-1 / DSM 13023 / NCIMB 13966).